Here is a 295-residue protein sequence, read N- to C-terminus: uncharacterized protein (295 aa).

The signal sequence occupies residues 1–19 (MFRKFLFIPLLIVTSLVKA). Residues 274–295 (KRNNPPLKNNNAKSKNSYETHK) are disordered. Positions 276–288 (NNPPLKNNNAKSK) are enriched in low complexity.

This is an uncharacterized protein from Rickettsia typhi (strain ATCC VR-144 / Wilmington).